A 71-amino-acid chain; its full sequence is Phosphatidylinositol N-acetylglucosaminyltransferase subunit Y (71 aa).

Residues 1–3 (MFL) are Cytoplasmic-facing. The chain crosses the membrane as a helical span at residues 4-26 (SLPTLTVLIPLVSLAGLFYSASV). Residues 27 to 44 (EENFPQGCTSTASLCFYS) lie on the Lumenal side of the membrane. A helical membrane pass occupies residues 45-65 (LLLPITIPVYVFFHLWTWMGI). The Cytoplasmic portion of the chain corresponds to 66 to 71 (KLFRHN).

In terms of assembly, component of the glycosylphosphatidylinositol-N-acetylglucosaminyltransferase (GPI-GnT) complex composed at least by PIGA, PIGC, PIGH, PIGP, PIGQ, PIGY and DPM2. Interacts directly with PIGA; this interaction regulates glycosylphosphatidylinositol-N-acetylglucosaminyltransferase activity. Does not interact with Ras proteins.

The protein resides in the endoplasmic reticulum membrane. The protein operates within glycolipid biosynthesis; glycosylphosphatidylinositol-anchor biosynthesis. Part of the glycosylphosphatidylinositol-N-acetylglucosaminyltransferase (GPI-GnT) complex that catalyzes the transfer of N-acetylglucosamine from UDP-N-acetylglucosamine to phosphatidylinositol and participates in the first step of GPI biosynthesis. May act by regulating the catalytic subunit PIGA. In Homo sapiens (Human), this protein is Phosphatidylinositol N-acetylglucosaminyltransferase subunit Y.